Consider the following 4265-residue polypeptide: Dynein axonemal heavy chain 1 (4265 aa).

The segment at methionine 1 to lysine 88 is disordered. A stem region spans residues methionine 1–isoleucine 1542. A compositionally biased stretch (pro residues) spans proline 60–proline 69. 4 AAA regions span residues tyrosine 1543–alanine 1764, glutamate 1824–lysine 2057, threonine 2189–glycine 2449, and aspartate 2547–histidine 2799. The GPAGTGKT motif signature appears at glycine 1581–threonine 1588. Glycine 1581–threonine 1588 contributes to the ATP binding site. The CFDEFNR motif signature appears at cysteine 1631–arginine 1637. Residues glycine 1862–serine 1869, glycine 2227–threonine 2234, and glycine 2586–serine 2593 each bind ATP. Positions phenylalanine 2814 to cysteine 3112 are stalk. Positions leucine 3074–leucine 3122 form a coiled coil. AAA stretches follow at residues leucine 3197–alanine 3427 and methionine 3640–methionine 3859.

This sequence belongs to the dynein heavy chain family. As to quaternary structure, consists of at least two heavy chains and a number of intermediate and light chains. In terms of tissue distribution, expressed primarily in trachea and testis, 2 tissues containing axonemal structures. Also expressed in brain.

It localises to the cytoplasm. It is found in the cytoskeleton. The protein resides in the cilium axoneme. The protein localises to the cell projection. Its subcellular location is the cilium. It localises to the flagellum. Functionally, force generating protein of cilia required for sperm flagellum motility. Produces force towards the minus ends of microtubules. Dynein has ATPase activity; the force-producing power stroke is thought to occur on release of ADP. Required in spermatozoa for the formation of the inner dynein arms and biogenesis of the axoneme. In Homo sapiens (Human), this protein is Dynein axonemal heavy chain 1.